We begin with the raw amino-acid sequence, 188 residues long: Peptidyl-tRNA hydrolase (188 aa).

Tyrosine 14 lines the tRNA pocket. Histidine 19 acts as the Proton acceptor in catalysis. Residues tyrosine 64, asparagine 66, and asparagine 112 each coordinate tRNA.

Belongs to the PTH family. As to quaternary structure, monomer.

It localises to the cytoplasm. The catalysed reaction is an N-acyl-L-alpha-aminoacyl-tRNA + H2O = an N-acyl-L-amino acid + a tRNA + H(+). In terms of biological role, hydrolyzes ribosome-free peptidyl-tRNAs (with 1 or more amino acids incorporated), which drop off the ribosome during protein synthesis, or as a result of ribosome stalling. Its function is as follows. Catalyzes the release of premature peptidyl moieties from peptidyl-tRNA molecules trapped in stalled 50S ribosomal subunits, and thus maintains levels of free tRNAs and 50S ribosomes. In Clostridium perfringens (strain ATCC 13124 / DSM 756 / JCM 1290 / NCIMB 6125 / NCTC 8237 / Type A), this protein is Peptidyl-tRNA hydrolase.